The sequence spans 352 residues: S-norcoclaurine synthase 1 (352 aa).

In terms of domain architecture, Fe2OG dioxygenase spans 200 to 304 (KPLRTVFNRE…RLSIAAFHDP (105 aa)). Residues H228, D230, and H285 each coordinate Fe cation.

This sequence belongs to the iron/ascorbate-dependent oxidoreductase family. As to quaternary structure, monomer. Fe cation serves as cofactor.

It carries out the reaction (4-hydroxyphenyl)acetaldehyde + dopamine = (S)-norcoclaurine + H2O. Inhibited by O-phenanthroline, but not by EDTA. Involved in the biosynthesis of the common precursor of all benzylisoquinoline alkaloids such as morphine, sanguinarine, codeine or berberine. Condenses dopamine and phenylacetaldehyde, 3,4-dihydrophenylacetaldehyde or 4-hydroxyphenylacetaldehyde. The sequence is that of S-norcoclaurine synthase 1 (NCS1) from Coptis japonica (Japanese goldthread).